The chain runs to 292 residues: Protein SETSIP (292 aa).

The span at 1 to 11 (MAPKRQSPLPL) shows a compositional bias: low complexity. Disordered regions lie at residues 1–43 (MAPK…EQQE) and 158–292 (LNES…GEDD). Residues 35–78 (KKGEKEQQEAIEHIDEVQNEIDRLNEQDSEEILKVEQKYNKLRQ) adopt a coiled-coil conformation. A compositionally biased stretch (acidic residues) spans 237–292 (DMDDEEGGEDDDDDDDDGDEGEEELEDIDEGDEDEGEEDEDDDEGEEGEEDEGEDD).

This sequence belongs to the nucleosome assembly protein (NAP) family. In terms of tissue distribution, expressed in endothelial cell (EC) and protein-induced pluripotent stem (PiPS) endothelial cell (EC) (at protein level).

It is found in the cytoplasm. The protein resides in the nucleus. Plays a role as a transcriptional activator involved in the early stage of somatic cell reprogramming. Promotes the differentiation of protein-induced pluripotent stem (PiPS) cells into endothelial cells and the formation of vascular-like tubes (in vitro). Involved in the transcription induction of vascular endothelial-cadherin (VE-cadherin) expression. Associates to the VE-cadherin gene promoter. The polypeptide is Protein SETSIP (SETSIP) (Homo sapiens (Human)).